The sequence spans 353 residues: MAIDENKQKALAAAMGQIEKQFGKGSIMRLGEDRSMDVETISTGSLSLDIALGAGGLPMGRIVEIYGPESSGKTTLTLQVIAAAQREGKTCAFIDAEHALDPVYARKLGVDIDNLLCSQPDTGEQALEICDALARSGAVDVIVVDSVAALTPKAEIEGEIGDSHMGLAARMMSQAMRKLAGNLKQSNTLLIFINQIRMKIGVMFGNPETTTGGNALKFYASVRLDIRRIGAVKEGDNVVGSETRVKVVKNKIAAPFKQAEFQILYGEGINFYGELVDLGVKEKLIEKAGAWYSYNGEKIGQGKANATTWLKENPATAKEIEKRVRELLLSNQNATPDFAVDDSEGVAETNEDF.

Residue 67–74 (GPESSGKT) participates in ATP binding.

Belongs to the RecA family.

Its subcellular location is the cytoplasm. Functionally, can catalyze the hydrolysis of ATP in the presence of single-stranded DNA, the ATP-dependent uptake of single-stranded DNA by duplex DNA, and the ATP-dependent hybridization of homologous single-stranded DNAs. It interacts with LexA causing its activation and leading to its autocatalytic cleavage. In Salmonella paratyphi A (strain ATCC 9150 / SARB42), this protein is Protein RecA.